The following is a 932-amino-acid chain: Progesterone receptor (932 aa).

Positions 1–164 (MTELKAKGPR…PATQGVLSPL (164 aa)) are AF3; mediates transcriptional activation. The disordered stretch occupies residues 1–254 (MTELKAKGPR…GGAAAGGAAA (254 aa)). The segment at 1 to 565 (MTELKAKGPR…YSFESLPQKI (565 aa)) is modulating, Pro-Rich. Serine 20 carries the post-translational modification Phosphoserine. An LXXL motif 1 motif is present at residues 55-59 (LDGLL). Serine 81 is modified (phosphoserine). A compositionally biased stretch (low complexity) spans 88-103 (SRAEATRGAGGSSSSP). An LXXL motif 2 motif is present at residues 115–119 (LDTLL). Serine 130 and serine 162 each carry phosphoserine. The tract at residues 165-304 (MSRSGGKAGD…LATTVMDFIH (140 aa)) is mediates transcriptional transrepression. Positions 183–187 (KVLPQ) match the Nuclear localization signal motif. Phosphoserine occurs at positions 190 and 213. The segment covering 220-231 (EVEEEDGSESED) has biased composition (acidic residues). A compositionally biased stretch (low complexity) spans 232-254 (SAGPLLKGKPRALGGAAAGGAAA). Serine 293 is modified (phosphoserine; by MAPK1). Low complexity predominate over residues 334–349 (AASAFAPPRSSPSASS). Residues 334–356 (AASAFAPPRSSPSASSTPVAVGD) are disordered. Position 344 is a phosphoserine; by MAPK (serine 344). A Glycyl lysine isopeptide (Lys-Gly) (interchain with G-Cter in SUMO); alternate cross-link involves residue lysine 387. A Glycyl lysine isopeptide (Lys-Gly) (interchain with G-Cter in ubiquitin); alternate cross-link involves residue lysine 387. Disordered regions lie at residues 414–451 (PDFPLGPPPPLPPRAPPSRPGEAAVTAAPASASVSSAS) and 468–499 (PPQQGPFAPPPSKAPGAGGCLPPRDGLPSTAA). The span at 417-432 (PLGPPPPLPPRAPPSR) shows a compositional bias: pro residues. Residues 433 to 451 (PGEAAVTAAPASASVSSAS) show a composition bias toward low complexity. The tract at residues 455-545 (STLECILYKA…VYPPYLNYLR (91 aa)) is AF1; mediates transcriptional activation. Over residues 470–480 (QQGPFAPPPSK) the composition is skewed to pro residues. Lysine 530 is covalently cross-linked (Glycyl lysine isopeptide (Lys-Gly) (interchain with G-Cter in SUMO)). NR C4-type zinc fingers lie at residues 566–586 (CLICGDEASGCHYGVLTCGSC) and 602–626 (CAGRNDCIVDKIRRKNCPACRLRKC). Residues 566-638 (CLICGDEASG…AGMVLGGRKF (73 aa)) constitute a DNA-binding region (nuclear receptor). Position 675 is a phosphoserine (serine 675). The NR LBD domain maps to 678–912 (QDIQLIPPLI…EFPEMMSEVI (235 aa)). Residues 686–932 (LINLLMSIEP…MVKPLLFHKK (247 aa)) are AF2; mediates transcriptional activation. A progesterone-binding site is contributed by arginine 765.

It belongs to the nuclear hormone receptor family. Interacts with SMARD1 and UNC45A. Interacts with CUEDC2; the interaction promotes ubiquitination, decreases sumoylation, and represses transcriptional activity. Interacts with PIAS3; the interaction promotes sumoylation of PR in a hormone-dependent manner, inhibits DNA-binding, and alters nuclear export. Interacts with SP1; the interaction requires ligand-induced phosphorylation on Ser-344 by ERK1/2-MAPK. Interacts with PRMT2. Interacts with NCOA2 and NCOA1. Interacts with KLF9. Interacts with GTF2B. Post-translationally, phosphorylated on multiple serine sites. Several of these sites are hormone-dependent. Phosphorylation on Ser-293 is highly hormone-dependent and modulates ubiquitination and sumoylation on Lys-387. Phosphorylation on Ser-102 and Ser-344 also requires induction by hormone. Basal phosphorylation on Ser-81, Ser-162 and Ser-190 is increased in response to progesterone and can be phosphorylated in vitro by the CDK2-A1 complex. Phosphorylation at Ser-162 and Ser-293, but not at Ser-190, is impaired during the G(2)/M phase of the cell cycle. Phosphorylation on Ser-344 by ERK1/2 MAPK is required for interaction with SP1. Sumoylation is hormone-dependent and represses transcriptional activity. Sumoylation on all three sites is enhanced by PIAS3. Desumoylated by SENP1. Sumoylation on Lys-387, the main site of sumoylation, is repressed by ubiquitination on the same site, and modulated by phosphorylation at Ser-293. In terms of processing, ubiquitination is hormone-dependent and represses sumoylation on the same site. Promoted by MAPK-mediated phosphorylation on Ser-293. Ubiquitinated by UBR5, leading to its degradation: UBR5 specifically recognizes and binds ligand-bound PGR when it is not associated with coactivators (NCOAs). In presence of NCOAs, the UBR5-degron is not accessible, preventing its ubiquitination and degradation. Post-translationally, palmitoylated by ZDHHC7 and ZDHHC21. Palmitoylation is required for plasma membrane targeting and for rapid intracellular signaling via ERK and AKT kinases and cAMP generation.

Its subcellular location is the nucleus. The protein localises to the cytoplasm. In terms of biological role, the steroid hormones and their receptors are involved in the regulation of eukaryotic gene expression and affect cellular proliferation and differentiation in target tissues. Transcriptional activator of several progesteron-dependent promoters in a variety of cell types. Involved in activation of SRC-dependent MAPK signaling on hormone stimulation. The polypeptide is Progesterone receptor (PGR) (Hylobates lar (Lar gibbon)).